The following is a 269-amino-acid chain: Eukaryotic translation initiation factor 3 subunit G-1 (269 aa).

The RRM domain maps to 188–266 (AAIRISNLSE…LILSVEWSKP (79 aa)).

The protein belongs to the eIF-3 subunit G family. In terms of assembly, component of the eukaryotic translation initiation factor 3 (eIF-3) complex. The eIF-3 complex interacts with pix.

It is found in the cytoplasm. In terms of biological role, RNA-binding component of the eukaryotic translation initiation factor 3 (eIF-3) complex, which is involved in protein synthesis of a specialized repertoire of mRNAs and, together with other initiation factors, stimulates binding of mRNA and methionyl-tRNAi to the 40S ribosome. The eIF-3 complex specifically targets and initiates translation of a subset of mRNAs involved in cell proliferation. This subunit can bind 18S rRNA. The protein is Eukaryotic translation initiation factor 3 subunit G-1 of Drosophila willistoni (Fruit fly).